Here is a 536-residue protein sequence, read N- to C-terminus: Octopamine receptor beta-2R (536 aa).

The interval Met1–Arg26 is disordered. Residues Met1 to Ala157 are Extracellular-facing. Basic residues predominate over residues Gln14–Arg26. N-linked (GlcNAc...) asparagine glycosylation is found at Asn18, Asn92, Asn113, and Asn126. The chain crosses the membrane as a helical span at residues Phe158–Val178. Topologically, residues Met179 to Tyr190 are cytoplasmic. Residues Phe191–Phe211 traverse the membrane as a helical segment. Residues Ser212–Asp233 are Extracellular-facing. A helical membrane pass occupies residues Val234–Val256. The Cytoplasmic portion of the chain corresponds to Lys257–Val270. A helical membrane pass occupies residues Gly271–Ile291. At Gly292–Val320 the chain is on the extracellular side. Residues Ile321 to Ile341 form a helical membrane-spanning segment. Residues Phe342 to Thr412 lie on the Cytoplasmic side of the membrane. Residues Leu413 to Leu433 form a helical membrane-spanning segment. Topologically, residues Ser434–Asp444 are extracellular. The chain crosses the membrane as a helical span at residues Ile445–Tyr465. Residues Ala466–Leu536 are Cytoplasmic-facing.

This sequence belongs to the G-protein coupled receptor 1 family. In terms of tissue distribution, in the adult, expressed in the superior protocerebrum and the optic lobe medulla of the central nervous system, nurse cells of egg chambers in the ovary at oogenic stages 1-10, and spermatogonia and spermatocytes in the testis. Expressed in the oviduct epithelium. Also expressed in the spermatheca. Expressed in embryonic and larval ventral nerve cord and brain lobe, embryonic and larval salivary glands and larval imaginal disk and midgut. Also expressed in larval synaptic boutons.

It localises to the cell membrane. Autoreceptor for octopamine (OA), which is a neurotransmitter, neurohormone, and neuromodulator in invertebrates. Essential for ovulation and fertilization. During ovulation it mediates the OA-induced relaxation of the oviduct visceral muscles, by increasing cAMP levels and activating effectors such as calmodulin-dependent kinase II (CaMKII) and cAMP-dependent protein kinase A (PKA) pathways. Positively regulates synaptic growth; an action that is antagonized by Octbeta1R. The protein is Octopamine receptor beta-2R of Drosophila melanogaster (Fruit fly).